A 272-amino-acid chain; its full sequence is Replication-associated protein A (272 aa).

The CRESS-DNA virus Rep endonuclease domain maps to L11 to F114. Residues F18–Y21 carry the RCR-1 motif. A divalent metal cation contacts are provided by E52, H60, and H62. The short motif at H60–H62 is the RCR-2 element. The active-site For DNA cleavage activity is Y100. The RCR-3 signature appears at Y100–K103. E104 provides a ligand contact to a divalent metal cation. Residues S175–F187 are oligomerization. Residues L198 to E202 form a binding to RBR1 region. The tract at residues M221–V230 is transactivation. Residues D250–E265 are compositionally biased toward polar residues. The tract at residues D250–A272 is disordered.

It belongs to the geminiviridae Rep protein family. Homooligomer. Interacts with host retinoblastoma-related protein 1 (RBR1), and may thereby deregulate the host cell cycle. Part of the C- and V-complexes which are RepA-Rep-DNA complexes involved in the c-sense and v-sense transcription. The cofactor is Mg(2+). Requires Mn(2+) as cofactor.

Its subcellular location is the host nucleus. The protein localises to the host cytoplasm. Implicated in enhancement of V-sense gene expression. Acts a an inhibitor of C-sense gene transcription. The protein is Replication-associated protein A of Avena sativa (Oat).